The primary structure comprises 328 residues: 5,10-methylenetetrahydromethanopterin reductase (328 aa).

The protein belongs to the mer family.

The protein localises to the cytoplasm. The enzyme catalyses 5-methyl-5,6,7,8-tetrahydromethanopterin + oxidized coenzyme F420-(gamma-L-Glu)(n) + H(+) = 5,10-methylenetetrahydromethanopterin + reduced coenzyme F420-(gamma-L-Glu)(n). The protein operates within one-carbon metabolism; methanogenesis from CO(2); methyl-coenzyme M from 5,10-methylene-5,6,7,8-tetrahydromethanopterin: step 1/2. Its function is as follows. Catalyzes the reversible reduction of methylene-H(4)MPT to methyl-H(4)MPT. This is 5,10-methylenetetrahydromethanopterin reductase from Methanosarcina barkeri (strain Fusaro / DSM 804).